We begin with the raw amino-acid sequence, 348 residues long: Holliday junction branch migration complex subunit RuvB (348 aa).

The interval 4 to 184 is large ATPase domain (RuvB-L); it reads ADRLIAASGR…FGIVQRLEFY (181 aa). Residues Ile23, Arg24, Gly65, Lys68, Thr69, Thr70, 131–133, Arg174, Tyr184, and Arg221 contribute to the ATP site; that span reads EDF. Residue Thr69 participates in Mg(2+) binding. Residues 185–255 are small ATPAse domain (RuvB-S); that stretch reads SDKDLATIVS…VADLALNLLD (71 aa). The interval 258–348 is head domain (RuvB-H); it reads ERGFDHSDRR…GADFSEAGDE (91 aa). DNA-binding residues include Arg294, Arg313, and Arg318.

The protein belongs to the RuvB family. In terms of assembly, homohexamer. Forms an RuvA(8)-RuvB(12)-Holliday junction (HJ) complex. HJ DNA is sandwiched between 2 RuvA tetramers; dsDNA enters through RuvA and exits via RuvB. An RuvB hexamer assembles on each DNA strand where it exits the tetramer. Each RuvB hexamer is contacted by two RuvA subunits (via domain III) on 2 adjacent RuvB subunits; this complex drives branch migration. In the full resolvosome a probable DNA-RuvA(4)-RuvB(12)-RuvC(2) complex forms which resolves the HJ.

Its subcellular location is the cytoplasm. It carries out the reaction ATP + H2O = ADP + phosphate + H(+). In terms of biological role, the RuvA-RuvB-RuvC complex processes Holliday junction (HJ) DNA during genetic recombination and DNA repair, while the RuvA-RuvB complex plays an important role in the rescue of blocked DNA replication forks via replication fork reversal (RFR). RuvA specifically binds to HJ cruciform DNA, conferring on it an open structure. The RuvB hexamer acts as an ATP-dependent pump, pulling dsDNA into and through the RuvAB complex. RuvB forms 2 homohexamers on either side of HJ DNA bound by 1 or 2 RuvA tetramers; 4 subunits per hexamer contact DNA at a time. Coordinated motions by a converter formed by DNA-disengaged RuvB subunits stimulates ATP hydrolysis and nucleotide exchange. Immobilization of the converter enables RuvB to convert the ATP-contained energy into a lever motion, pulling 2 nucleotides of DNA out of the RuvA tetramer per ATP hydrolyzed, thus driving DNA branch migration. The RuvB motors rotate together with the DNA substrate, which together with the progressing nucleotide cycle form the mechanistic basis for DNA recombination by continuous HJ branch migration. Branch migration allows RuvC to scan DNA until it finds its consensus sequence, where it cleaves and resolves cruciform DNA. The sequence is that of Holliday junction branch migration complex subunit RuvB from Pseudomonas putida (strain W619).